Reading from the N-terminus, the 320-residue chain is uncharacterized protein (320 aa).

It belongs to the anthranilate phosphoribosyltransferase family.

This is an uncharacterized protein from Escherichia coli (strain K12).